The sequence spans 307 residues: Aspartate carbamoyltransferase catalytic subunit (307 aa).

The carbamoyl phosphate site is built by Arg54 and Thr55. Lys83 lines the L-aspartate pocket. Carbamoyl phosphate is bound by residues Arg104, His132, and Gln135. L-aspartate is bound by residues Arg165 and Arg228. Carbamoyl phosphate-binding residues include Leu267 and Pro268.

Belongs to the aspartate/ornithine carbamoyltransferase superfamily. ATCase family. Heterododecamer (2C3:3R2) of six catalytic PyrB chains organized as two trimers (C3), and six regulatory PyrI chains organized as three dimers (R2).

It catalyses the reaction carbamoyl phosphate + L-aspartate = N-carbamoyl-L-aspartate + phosphate + H(+). Its pathway is pyrimidine metabolism; UMP biosynthesis via de novo pathway; (S)-dihydroorotate from bicarbonate: step 2/3. In terms of biological role, catalyzes the condensation of carbamoyl phosphate and aspartate to form carbamoyl aspartate and inorganic phosphate, the committed step in the de novo pyrimidine nucleotide biosynthesis pathway. This chain is Aspartate carbamoyltransferase catalytic subunit, found in Clostridium botulinum (strain Okra / Type B1).